The following is a 419-amino-acid chain: Gamma-glutamyl phosphate reductase (419 aa).

Belongs to the gamma-glutamyl phosphate reductase family.

It localises to the cytoplasm. It catalyses the reaction L-glutamate 5-semialdehyde + phosphate + NADP(+) = L-glutamyl 5-phosphate + NADPH + H(+). The protein operates within amino-acid biosynthesis; L-proline biosynthesis; L-glutamate 5-semialdehyde from L-glutamate: step 2/2. Its function is as follows. Catalyzes the NADPH-dependent reduction of L-glutamate 5-phosphate into L-glutamate 5-semialdehyde and phosphate. The product spontaneously undergoes cyclization to form 1-pyrroline-5-carboxylate. The chain is Gamma-glutamyl phosphate reductase from Caldicellulosiruptor bescii (strain ATCC BAA-1888 / DSM 6725 / KCTC 15123 / Z-1320) (Anaerocellum thermophilum).